The following is a 442-amino-acid chain: Elongation factor 1-gamma (442 aa).

Residues 2 to 87 (AAGTLYTYPE…FLSNDALRGS (86 aa)) enclose the GST N-terminal domain. Residues 88–216 (TPQASAQVLQ…VKLCEKMAQF (129 aa)) enclose the GST C-terminal domain. 2 stretches are compositionally biased toward basic and acidic residues: residues 224 to 242 (MQPKKEAPAKKEKAGKEGG) and 249 to 263 (QEKKEKKKEEKKAAP). The interval 224 to 273 (MQPKKEAPAKKEKAGKEGGKQQQPQQEKKEKKKEEKKAAPAEEEMDECEA) is disordered. The 162-residue stretch at 281–442 (AKDPYAHLPK…KSFNQGKIFK (162 aa)) folds into the EF-1-gamma C-terminal domain.

EF-1 is composed of four subunits: alpha, beta, delta, and gamma.

In terms of biological role, probably plays a role in anchoring the complex to other cellular components. In Carassius auratus (Goldfish), this protein is Elongation factor 1-gamma (eef1g).